The following is a 128-amino-acid chain: Large-conductance mechanosensitive channel (128 aa).

2 consecutive transmembrane segments (helical) span residues F11 to G31 and G70 to V90.

Belongs to the MscL family. Homopentamer.

It localises to the cell membrane. Channel that opens in response to stretch forces in the membrane lipid bilayer. May participate in the regulation of osmotic pressure changes within the cell. The chain is Large-conductance mechanosensitive channel from Listeria innocua serovar 6a (strain ATCC BAA-680 / CLIP 11262).